Reading from the N-terminus, the 238-residue chain is Opacity protein opA66 (238 aa).

Ala1 is a signal peptide. 2 disordered regions span residues 88-109 (NLQR…QENG) and 162-183 (GARG…AHQE). Over residues 168 to 183 (PTVSSPYKNTQDAHQE) the composition is skewed to polar residues.

The protein belongs to the opacity porin family.

It is found in the cell outer membrane. Its function is as follows. Implicated in a number of adherence functions. OPA proteins are implicated in pathogenesis and are subject to phase variation. This is Opacity protein opA66 from Neisseria gonorrhoeae.